The sequence spans 90 residues: Serine protease inhibitor Cvsi-1 (90 aa).

Positions 1-19 (MDVVRTLILCVCLFGLTFA) are cleaved as a signal peptide.

Post-translationally, contains 6 disulfide bonds. As to expression, detected in hemolymph (at protein level). In oysters collected in the summer the expression level is highest in the digestive gland with low levels of expression in gill, mantle, labial palp, style-sac midgut, gonad, heart, and hemocyte. In winter expression levels are higher in all tissues with highest expression levels observed in the digestive gland. Within the digestive gland expression is limited to the basophil cells of the digestive diverticula.

It is found in the secreted. In terms of biological role, slow-binding inhibitor of serine proteases. The inhibitor rapidly binds to the protease forming a weak enzyme-inhibitor complex, and this is followed by a slow isomerization forming a tight-binding enzyme-inhibitor complex. Active against subtilisin A, perkinsin and trypsin with dissociation constants of 0.29 nM, 13.7 nM and 17.7 nM respectively. Not active against thermolysin, papain or pepsin. Has antiparasitic activity against the protozoan P.marinus. This Crassostrea virginica (Eastern oyster) protein is Serine protease inhibitor Cvsi-1.